Reading from the N-terminus, the 61-residue chain is Metallothionein (61 aa).

N-acetylmethionine is present on Met-1. The beta stretch occupies residues 1–29 (MDPNCSCAAGGSCTCAGSCKCKECKCTSC). A divalent metal cation contacts are provided by Cys-5, Cys-7, Cys-13, Cys-15, Cys-19, Cys-21, Cys-24, Cys-26, Cys-29, Cys-33, Cys-34, Cys-36, Cys-37, Cys-41, Cys-44, Cys-48, Cys-50, Cys-57, Cys-59, and Cys-60. Residues 30-61 (KKSCCSCCPPGCTKCAQGCVCKGASDKCNCCA) form an alpha region.

This sequence belongs to the metallothionein superfamily. Type 1 family. As to quaternary structure, monomer.

In terms of biological role, metallothioneins have a high content of cysteine residues that bind various heavy metals. The polypeptide is Metallothionein (Balaena mysticetus (Bowhead whale)).